The following is a 542-amino-acid chain: CTP synthase (542 aa).

The amidoligase domain stretch occupies residues 1–265; it reads MARYVFITGG…DDEVLAAFGI (265 aa). Residue Ser-13 participates in CTP binding. Ser-13 contributes to the UTP binding site. ATP-binding positions include 14–19 and Asp-71; that span reads SLGKGI. 2 residues coordinate Mg(2+): Asp-71 and Glu-139. Residues 146–148, 186–191, and Lys-222 each bind CTP; these read DIE and KTKPTQ. UTP-binding positions include 186–191 and Lys-222; that span reads KTKPTQ. Residues 291-541 form the Glutamine amidotransferase type-1 domain; it reads TIAIVGKYTG…IEAATEQSRL (251 aa). Gly-353 provides a ligand contact to L-glutamine. Catalysis depends on Cys-380, which acts as the Nucleophile; for glutamine hydrolysis. L-glutamine is bound by residues 381–384, Glu-404, and Arg-469; that span reads FGMQ. Catalysis depends on residues His-514 and Glu-516.

This sequence belongs to the CTP synthase family. In terms of assembly, homotetramer.

It carries out the reaction UTP + L-glutamine + ATP + H2O = CTP + L-glutamate + ADP + phosphate + 2 H(+). The catalysed reaction is L-glutamine + H2O = L-glutamate + NH4(+). It catalyses the reaction UTP + NH4(+) + ATP = CTP + ADP + phosphate + 2 H(+). It participates in pyrimidine metabolism; CTP biosynthesis via de novo pathway; CTP from UDP: step 2/2. Allosterically activated by GTP, when glutamine is the substrate; GTP has no effect on the reaction when ammonia is the substrate. The allosteric effector GTP functions by stabilizing the protein conformation that binds the tetrahedral intermediate(s) formed during glutamine hydrolysis. Inhibited by the product CTP, via allosteric rather than competitive inhibition. Catalyzes the ATP-dependent amination of UTP to CTP with either L-glutamine or ammonia as the source of nitrogen. Regulates intracellular CTP levels through interactions with the four ribonucleotide triphosphates. This Rhizobium johnstonii (strain DSM 114642 / LMG 32736 / 3841) (Rhizobium leguminosarum bv. viciae) protein is CTP synthase.